Reading from the N-terminus, the 45-residue chain is Photosystem II reaction center protein K (45 aa).

The propeptide occupies 1–8 (MNSALFLA). The chain crosses the membrane as a helical span at residues 23-43 (ILPVIPVFFLLLAFVWQAAIG).

It belongs to the PsbK family. PSII is composed of 1 copy each of membrane proteins PsbA, PsbB, PsbC, PsbD, PsbE, PsbF, PsbH, PsbI, PsbJ, PsbK, PsbL, PsbM, PsbT, PsbX, PsbY, PsbZ, Psb30/Ycf12, at least 3 peripheral proteins of the oxygen-evolving complex and a large number of cofactors. It forms dimeric complexes.

The protein localises to the plastid. It is found in the chloroplast thylakoid membrane. Functionally, one of the components of the core complex of photosystem II (PSII). PSII is a light-driven water:plastoquinone oxidoreductase that uses light energy to abstract electrons from H(2)O, generating O(2) and a proton gradient subsequently used for ATP formation. It consists of a core antenna complex that captures photons, and an electron transfer chain that converts photonic excitation into a charge separation. The polypeptide is Photosystem II reaction center protein K (Pyropia yezoensis (Susabi-nori)).